The sequence spans 580 residues: Jasmonoyl--L-amino acid synthetase JAR6 (580 aa).

Position 100 (Ser-100) interacts with ATP. Jasmonate is bound at residue Ser-103. ATP contacts are provided by residues Met-120, Thr-123, Gly-164, Asn-169, and Gly-332 to Trp-337. Thr-167–Tyr-171 contacts an L-alpha-amino acid. Position 329–332 (Ala-329–Gly-332) interacts with jasmonate. Lys-534–His-538 serves as a coordination point for an L-alpha-amino acid.

It belongs to the IAA-amido conjugating enzyme family.

The enzyme catalyses a jasmonate + an L-alpha-amino acid + ATP = a jasmonyl-L-amino acid + AMP + diphosphate + H(+). Functionally, catalyzes the synthesis of jasmonate-amino acid conjugates by adenylation. Catalyzes the conjugation of jasmonate (JA) to Ile, Leu and Val. Catalyzes the conjugation of JA to Ile that may mediate defense signaling and resistance to the herbivore Manduca sexta caterpillars. In Nicotiana attenuata (Coyote tobacco), this protein is Jasmonoyl--L-amino acid synthetase JAR6 (JAR6).